We begin with the raw amino-acid sequence, 79 residues long: Small ribosomal subunit protein bS18 (79 aa).

Belongs to the bacterial ribosomal protein bS18 family. In terms of assembly, part of the 30S ribosomal subunit. Forms a tight heterodimer with protein bS6.

In terms of biological role, binds as a heterodimer with protein bS6 to the central domain of the 16S rRNA, where it helps stabilize the platform of the 30S subunit. This chain is Small ribosomal subunit protein bS18, found in Aster yellows witches'-broom phytoplasma (strain AYWB).